The chain runs to 384 residues: Mitogen-activated protein kinase homolog 1 (384 aa).

Positions 32 to 319 constitute a Protein kinase domain; sequence YVPIKPIGRG…VMEALQHPYM (288 aa). Residues 38-46 and K61 contribute to the ATP site; that span reads IGRGAYGIV. Catalysis depends on D158, which acts as the Proton acceptor. Phosphothreonine is present on T191. The TXY motif lies at 191–193; it reads TEY. Y193 is modified (phosphotyrosine).

The protein belongs to the protein kinase superfamily. CMGC Ser/Thr protein kinase family. MAP kinase subfamily. It depends on Mg(2+) as a cofactor. Post-translationally, dually phosphorylated on Thr-191 and Tyr-193, which activates the enzyme. Expressed in vegetative organs such as leaf, root, or stem. In the reproductive organs, it is found in the ovary, but not in the stamen.

It carries out the reaction L-seryl-[protein] + ATP = O-phospho-L-seryl-[protein] + ADP + H(+). The catalysed reaction is L-threonyl-[protein] + ATP = O-phospho-L-threonyl-[protein] + ADP + H(+). With respect to regulation, activated by tyrosine and threonine phosphorylation. The protein is Mitogen-activated protein kinase homolog 1 (MPK1) of Petunia hybrida (Petunia).